The primary structure comprises 784 residues: Copal-8-ol diphosphate hydratase TPSSA9, chloroplastic (784 aa).

R240 lines the substrate pocket. Mg(2+) is bound by residues D372 and D374. The DXDD motif motif lies at 372-375 (DIDD). R459 is a substrate binding site.

It belongs to the terpene synthase family.

The protein localises to the plastid. It localises to the chloroplast. It carries out the reaction (2E,6E,10E)-geranylgeranyl diphosphate + H2O = 8-hydroxycopalyl diphosphate. It functions in the pathway secondary metabolite biosynthesis; terpenoid biosynthesis. Involved in the biosynthesis of labdane-type diterpenoid including sclareol, a diterpene-diol that is used as fragrance and flavoring, and has anticancer effects (able to kill leukemic and colon cancer cells by apoptosis). Sclareol can also be used as synthesis precursor of ambergris substitution fragance products such as ambrox. Terpene synthase that produces 8-hydroxycopalyl diphosphate from geranylgeranyl diphosphate (GGPP). This is Copal-8-ol diphosphate hydratase TPSSA9, chloroplastic from Salvia sclarea (Clary sage).